The primary structure comprises 989 residues: Phosphoenolpyruvate carboxylase (989 aa).

Residues His-175 and Lys-630 contribute to the active site.

Belongs to the PEPCase type 1 family. Requires Mg(2+) as cofactor.

It carries out the reaction oxaloacetate + phosphate = phosphoenolpyruvate + hydrogencarbonate. In terms of biological role, forms oxaloacetate, a four-carbon dicarboxylic acid source for the tricarboxylic acid cycle. In Prochlorococcus marinus (strain MIT 9301), this protein is Phosphoenolpyruvate carboxylase.